Here is a 134-residue protein sequence, read N- to C-terminus: S-protein homolog 31 (134 aa).

The first 21 residues, 1–21 (MKILSVFLFVFSIYIFGHVSG), serve as a signal peptide directing secretion. The N-linked (GlcNAc...) asparagine glycan is linked to Asn87.

It belongs to the plant self-incompatibility (S1) protein family.

The protein resides in the secreted. The sequence is that of S-protein homolog 31 from Arabidopsis thaliana (Mouse-ear cress).